The sequence spans 397 residues: ATP-dependent RNA helicase RhlB (397 aa).

Residues 8–36 (TRFHDFNLAPELMHAIQDLGFPYCTPIQA) carry the Q motif motif. One can recognise a Helicase ATP-binding domain in the interval 39–219 (LGFTLKGKDA…KQWTTDPSIV (181 aa)). Position 52-59 (52-59 (AQTGTGKT)) interacts with ATP. Positions 165–168 (DEAD) match the DEAD box motif. The Helicase C-terminal domain maps to 242 to 392 (DKYKLLYNLV…TPPTHLLRAV (151 aa)).

This sequence belongs to the DEAD box helicase family. RhlB subfamily. Component of the RNA degradosome, which is a multiprotein complex involved in RNA processing and mRNA degradation.

It is found in the cytoplasm. The catalysed reaction is ATP + H2O = ADP + phosphate + H(+). In terms of biological role, DEAD-box RNA helicase involved in RNA degradation. Has RNA-dependent ATPase activity and unwinds double-stranded RNA. In Pseudomonas syringae pv. tomato (strain ATCC BAA-871 / DC3000), this protein is ATP-dependent RNA helicase RhlB.